The chain runs to 803 residues: Ribonuclease II, chloroplastic/mitochondrial (803 aa).

Residues 1–35 (MMSVRAINGCSIIRTATSAGGPPVSLFRHRIQRLR) constitute a chloroplast and mitochondrion transit peptide. One can recognise an RNB domain in the interval 399 to 694 (RIDLTHLKVY…AHYQIKAFLR (296 aa)).

This sequence belongs to the RNR ribonuclease family. As to expression, expressed in seedlings, roots, leaves and flowers.

It localises to the mitochondrion. It is found in the plastid. The protein resides in the chloroplast. The enzyme catalyses Exonucleolytic cleavage in the 3'- to 5'-direction to yield nucleoside 5'-phosphates.. Functionally, 3'-5' exoribonuclease that catalyzes 3' maturation of chloroplast and mitochondrion ribosomal RNAs; degrades short nucleotidic extensions to generate the mature 3'-ends. Involved in the maturation of 23S, 16S and 5S rRNAs. The chain is Ribonuclease II, chloroplastic/mitochondrial (RNR1) from Arabidopsis thaliana (Mouse-ear cress).